We begin with the raw amino-acid sequence, 98 residues long: Defensin-B (98 aa).

The N-terminal stretch at 1–20 (MKSITVICFLALCTVAITSA) is a signal peptide. The propeptide occupies 21–58 (YPQEPVLADEARPFANSLFDELPEETYQAAVENFRLKR). 3 disulfide bridges follow: Cys61–Cys88, Cys74–Cys94, and Cys78–Cys96.

The protein belongs to the invertebrate defensin family. Type 1 subfamily.

Its subcellular location is the secreted. In terms of biological role, antibacterial peptide mostly active against Gram-positive bacteria. This is Defensin-B (DEFB) from Aedes aegypti (Yellowfever mosquito).